Here is a 243-residue protein sequence, read N- to C-terminus: CAVP-target protein (243 aa).

Residues 1-22 are disordered; the sequence is PKPPAEAKPAAKPAAPPAAANP. Low complexity predominate over residues 7-20; the sequence is AKPAAKPAAPPAAA. In terms of domain architecture, IQ spans 35-62; it reads SAATRIQASFRMHKNRMALKEKSIPKFS. Ig-like C2-type domains lie at 59–150 and 151–243; these read PKFS…LALE and VPAK…VKVN.

In terms of biological role, this protein is the target of CAVP, which binds to it in a calcium-dependent manner. In Branchiostoma lanceolatum (Common lancelet), this protein is CAVP-target protein.